The chain runs to 256 residues: UPF0644 protein PB2B4.06 (256 aa).

A helical membrane pass occupies residues 34–56; it reads GVVYAGVSGTCAAAGYMFGNFVM.

This sequence belongs to the UPF0644 family.

The protein localises to the mitochondrion membrane. The protein is UPF0644 protein PB2B4.06 of Schizosaccharomyces pombe (strain 972 / ATCC 24843) (Fission yeast).